The chain runs to 491 residues: Probable cysteine proteinase 024R (491 aa).

Active-site residues include Cys132, His325, and Asn355. A helical membrane pass occupies residues 467–487 (ALDLALLVLPALLIVIVVLIG).

It belongs to the peptidase C1 family.

It is found in the membrane. Its function is as follows. Probable cysteine protease. This chain is Probable cysteine proteinase 024R, found in Invertebrate iridescent virus 3 (IIV-3).